The chain runs to 62 residues: Delta-theraphotoxin-Cg1a 3 (62 aa).

The signal sequence occupies residues 1-21 (MKTSILFVIFSLALVFALSPA). The propeptide occupies 22 to 29 (TEIEETDR). 3 cysteine pairs are disulfide-bonded: cysteine 31–cysteine 46, cysteine 38–cysteine 51, and cysteine 45–cysteine 58.

Belongs to the neurotoxin 10 (Hwtx-1) family. 33 (Jztx-1) subfamily. As to expression, expressed by the venom gland.

The protein localises to the secreted. Moderately inhibits voltage-gated sodium channels and weakly inhibits voltage-gated potassium channel. Inhibits the inactivation of rat Nav1.2/SCN2A (IC(50)=870 nM), rat Nav1.3/SCN3A (IC(50)=845 nM), rat Nav1.4/SCN4A (IC(50)=339 nM), human Nav1.5/SCN5A (IC(50)=335 nM) and human Nav1.7/SCN9A sodium channels (IC(50)=348 nM). The toxin delays the inactivation of sodium channels without affecting the activation and steady-state inactivation kinetics in the physiological range of voltages. Site-directed mutagenesis of the sodium channel indicates that the toxin interacts with site 3 located at the extracellular S3-S4 linker of domain IV. On potassium channels, it inhibits activation of channels with an IC(50) of 8.05 uM through a voltage sensor-trapping mechanism. It increases muscle contraction in several assays (mouse phrenic nerve-diaphragm, toad heart, rat vas deferens) and is suggested to act both presynaptically and postsynaptically. This chain is Delta-theraphotoxin-Cg1a 3, found in Chilobrachys guangxiensis (Chinese earth tiger tarantula).